The following is a 610-amino-acid chain: Zinc metalloproteinase-disintegrin-like brevilysin H6 (610 aa).

The N-terminal stretch at 1 to 20 (MIQVLLVTICLAAFPYQGSS) is a signal peptide. Residues 21–191 (IILESGNVND…ASQLNLTPEQ (171 aa)) constitute a propeptide that is removed on maturation. Residue Gln-192 is modified to Pyrrolidone carboxylic acid. Residues 198 to 394 (RFVELVLVAD…HNPECIVNEP (197 aa)) form the Peptidase M12B domain. Ca(2+) is bound by residues Glu-201 and Asp-285. 4 cysteine pairs are disulfide-bonded: Cys-309–Cys-389, Cys-349–Cys-373, Cys-351–Cys-356, and Cys-373–Cys-378. His-334 lines the Zn(2+) pocket. Residue Glu-335 is part of the active site. Zn(2+)-binding residues include His-338 and His-344. The N-linked (GlcNAc...) asparagine glycan is linked to Asn-372. Positions 389, 392, 404, 407, 409, 411, 414, and 417 each coordinate Ca(2+). Residues 402 to 488 (PPVCGNELLE…ECPADVFHKN (87 aa)) form the Disintegrin domain. 22 disulfides stabilise this stretch: Cys-405–Cys-424, Cys-405–Cys-434, Cys-416–Cys-429, Cys-416–Cys-434, Cys-418–Cys-424, Cys-428–Cys-451, Cys-442–Cys-448, Cys-447–Cys-473, Cys-460–Cys-480, Cys-467–Cys-492, Cys-467–Cys-499, Cys-492–Cys-504, Cys-499–Cys-504, Cys-511–Cys-526, Cys-511–Cys-561, Cys-526–Cys-572, Cys-539–Cys-549, Cys-549–Cys-556, Cys-556–Cys-598, Cys-561–Cys-572, Cys-592–Cys-603, and Cys-598–Cys-603. The short motif at 466-468 (ECD) is the D/ECD-tripeptide element. Positions 468, 469, 471, 483, and 484 each coordinate Ca(2+).

Belongs to the venom metalloproteinase (M12B) family. P-III subfamily. P-IIIb sub-subfamily. In terms of assembly, monomer. It depends on Zn(2+) as a cofactor. Post-translationally, in the absence of calcium ions, is autocatalytically degraded giving 29 (p29K) and 45 kDa (p45K) fragments. In presence of calcium ions, the p45K is not detected. As to expression, expressed by the venom gland.

It localises to the secreted. Inhibited by chelating agents. Calcium ions enhance its activity, they also suppress autoproteolysis, and contribute to the stability of the enzyme against pH, heating, urea and cysteine. In terms of biological role, shows weak hemorrhagic activity. Rapidly degrades the alpha-chain of fibrinogen (FGA). The sequence is that of Zinc metalloproteinase-disintegrin-like brevilysin H6 from Gloydius brevicauda (Korean slamosa snake).